The following is a 278-amino-acid chain: 2-dehydro-3-deoxyphosphooctonate aldolase (278 aa).

This sequence belongs to the KdsA family.

Its subcellular location is the cytoplasm. It carries out the reaction D-arabinose 5-phosphate + phosphoenolpyruvate + H2O = 3-deoxy-alpha-D-manno-2-octulosonate-8-phosphate + phosphate. It participates in carbohydrate biosynthesis; 3-deoxy-D-manno-octulosonate biosynthesis; 3-deoxy-D-manno-octulosonate from D-ribulose 5-phosphate: step 2/3. Its pathway is bacterial outer membrane biogenesis; lipopolysaccharide biosynthesis. The polypeptide is 2-dehydro-3-deoxyphosphooctonate aldolase (Koribacter versatilis (strain Ellin345)).